The chain runs to 112 residues: C-C motif chemokine 27 (112 aa).

The first 24 residues, 1-24 (MKGPPTFCSLLLLSLLLSPDPTAA), serve as a signal peptide directing secretion. Cystine bridges form between C33–C62 and C34–C77.

Belongs to the intercrine beta (chemokine CC) family. In terms of assembly, monomer, dimer, and tetramer. Heparin avidly promotes oligomerization. Interacts with TNFAIP6 (via Link domain). Testis, thymus, placenta, ovary and skin.

It localises to the secreted. Chemotactic factor that attracts skin-associated memory T-lymphocytes. May play a role in mediating homing of lymphocytes to cutaneous sites. Binds to CCR10. The polypeptide is C-C motif chemokine 27 (CCL27) (Homo sapiens (Human)).